A 238-amino-acid polypeptide reads, in one-letter code: Glyceraldehyde 3-phosphate phosphatase (238 aa).

It belongs to the HAD-like hydrolase superfamily. Requires Mg(2+) as cofactor.

In terms of biological role, catalyzes the dephosphorylation of D,L-glyceraldehyde 3-phosphate in vitro. This is Glyceraldehyde 3-phosphate phosphatase from Pyrococcus abyssi (strain GE5 / Orsay).